Consider the following 217-residue polypeptide: 3-demethoxyubiquinol 3-hydroxylase (217 aa).

Fe cation contacts are provided by Glu66, Glu96, His99, Glu148, Glu180, and His183.

The protein belongs to the COQ7 family. Requires Fe cation as cofactor.

It is found in the cell membrane. The catalysed reaction is a 5-methoxy-2-methyl-3-(all-trans-polyprenyl)benzene-1,4-diol + AH2 + O2 = a 3-demethylubiquinol + A + H2O. The protein operates within cofactor biosynthesis; ubiquinone biosynthesis. In terms of biological role, catalyzes the hydroxylation of 2-nonaprenyl-3-methyl-6-methoxy-1,4-benzoquinol during ubiquinone biosynthesis. In Ralstonia pickettii (strain 12J), this protein is 3-demethoxyubiquinol 3-hydroxylase.